A 239-amino-acid chain; its full sequence is Peptidyl-tRNA hydrolase (239 aa).

Tyr-14 is a binding site for tRNA. Residue His-19 is the Proton acceptor of the active site. TRNA-binding residues include Phe-64, Asn-66, and Asn-112. The interval 186–239 is disordered; it reads RTAPPRPSTGTGRPPAKTPARAEEPPAPAASPAPATAPLPDARSPLQKLVDRFK. Residues 193 to 204 are compositionally biased toward low complexity; sequence STGTGRPPAKTP. Pro residues predominate over residues 210 to 222; that stretch reads PPAPAASPAPATA.

Belongs to the PTH family. As to quaternary structure, monomer.

The protein resides in the cytoplasm. The enzyme catalyses an N-acyl-L-alpha-aminoacyl-tRNA + H2O = an N-acyl-L-amino acid + a tRNA + H(+). Functionally, hydrolyzes ribosome-free peptidyl-tRNAs (with 1 or more amino acids incorporated), which drop off the ribosome during protein synthesis, or as a result of ribosome stalling. In terms of biological role, catalyzes the release of premature peptidyl moieties from peptidyl-tRNA molecules trapped in stalled 50S ribosomal subunits, and thus maintains levels of free tRNAs and 50S ribosomes. The sequence is that of Peptidyl-tRNA hydrolase from Ruegeria pomeroyi (strain ATCC 700808 / DSM 15171 / DSS-3) (Silicibacter pomeroyi).